A 330-amino-acid polypeptide reads, in one-letter code: MTITTTVKAKTLAVNNKNAPHTSATMHPRNVHRNGYPMSALCQSYPTLEAHVIKAKSGQQSIDFSKAASVKALNAALLIHYYGLNMWDIPEGYLCPPVPGRADYIHGLADLLAKDNKGVVPTGNRVIGLDIGVGANAIYPIIGSQTYGWDFVGSDIDDVALKSATTLANNNPKLKPLLAVRKQHDKAYIFAGIIQPDDHFTFSLCNPPFHKSAEEAAMGSLRKVKGLGRNKQKSNNTGNAQPITANKLNFAGQSNELWCDGGELAFIQRMIKESVEYQSQVGWFTCLVSKSLHLKAIETSARYFGAKQFMKVDMGQGQKISRFVAWKFRD.

The protein belongs to the methyltransferase superfamily. METTL16/RlmF family.

The protein localises to the cytoplasm. The catalysed reaction is adenosine(1618) in 23S rRNA + S-adenosyl-L-methionine = N(6)-methyladenosine(1618) in 23S rRNA + S-adenosyl-L-homocysteine + H(+). Functionally, specifically methylates the adenine in position 1618 of 23S rRNA. This is Ribosomal RNA large subunit methyltransferase F from Pseudoalteromonas atlantica (strain T6c / ATCC BAA-1087).